We begin with the raw amino-acid sequence, 280 residues long: Bis(5'-nucleosyl)-tetraphosphatase, symmetrical (280 aa).

It belongs to the Ap4A hydrolase family.

The catalysed reaction is P(1),P(4)-bis(5'-adenosyl) tetraphosphate + H2O = 2 ADP + 2 H(+). Its function is as follows. Hydrolyzes diadenosine 5',5'''-P1,P4-tetraphosphate to yield ADP. The protein is Bis(5'-nucleosyl)-tetraphosphatase, symmetrical of Shigella boydii serotype 18 (strain CDC 3083-94 / BS512).